The following is a 99-amino-acid chain: METLSFEFPAGQPPKGRALVGVVGSGDLEVLLEPGQPGKLSIQVVTSVNGASLRWKHLFERMFDGQTPPALSIDIHDFGATPGVVRLRLEQGFEEIGHD.

Serine 25 is modified (O-(phosphoribosyl dephospho-coenzyme A)serine).

Belongs to the MdcC family. Covalently binds the prosthetic group of malonate decarboxylase.

It is found in the cytoplasm. Its function is as follows. Subunit of malonate decarboxylase, it is an acyl carrier protein to which acetyl and malonyl thioester residues are bound via a 2'-(5''-phosphoribosyl)-3'-dephospho-CoA prosthetic group and turn over during the catalytic mechanism. The chain is Malonate decarboxylase acyl carrier protein from Pseudomonas syringae pv. tomato (strain ATCC BAA-871 / DC3000).